The sequence spans 138 residues: uncharacterized protein (138 aa).

Transmembrane regions (helical) follow at residues 21 to 43 and 48 to 65; these read TAFI…AGGA and SLIA…YAII.

The protein localises to the cell membrane. This is an uncharacterized protein from Archaeoglobus fulgidus (strain ATCC 49558 / DSM 4304 / JCM 9628 / NBRC 100126 / VC-16).